The chain runs to 102 residues: Movement protein (102 aa).

A helical transmembrane segment spans residues 43 to 63; that stretch reads VVALIVILFAVGIVYLAYTLF. Positions 82-102 are disordered; the sequence is IGFGNTPLRRPGEGNPNGGPV.

It belongs to the mastrevirus movement protein family. In terms of assembly, interacts with the capsid protein (CP). Part of a MP-CP-viral DNA complex.

Its subcellular location is the host membrane. Functionally, involved in the viral transport within, and between cells. The polypeptide is Movement protein (Tobacco yellow dwarf virus (strain Australia) (TYDV)).